Here is a 56-residue protein sequence, read N- to C-terminus: uncharacterized protein (56 aa).

This is an uncharacterized protein from Acidianus convivator (ABV).